Reading from the N-terminus, the 166-residue chain is Lithostathine-1-alpha (166 aa).

The signal sequence occupies residues 1–22; the sequence is MAQTSSYFMLISCLMFLSQSQG. Q23 carries the pyrrolidone carboxylic acid modification. O-linked (GalNAc) threonine glycosylation is present at T27. The C-type lectin domain occupies 34 to 164; it reads ISCPEGTNAY…EDKFSFVCKF (131 aa). 3 cysteine pairs are disulfide-bonded: C36/C47, C64/C162, and C137/C154.

In terms of processing, the composition of the O-linked carbohydrate on Thr-27 is complex and varied. In the crystallographic structure, the attached sugar appears to be N-acetylglucosamine, typical of an intracellular protein, rather than N-acetylgalactosamine. In terms of tissue distribution, in pancreatic acinar cells and, in lower levels, in brain. Enhanced expression of PSP-related transcripts and intraneuronal accumulation of PSP-like proteins is found in brain from Alzheimer disease and Down syndrome patients.

It localises to the secreted. Functionally, might act as an inhibitor of spontaneous calcium carbonate precipitation. May be associated with neuronal sprouting in brain, and with brain and pancreas regeneration. The polypeptide is Lithostathine-1-alpha (REG1A) (Homo sapiens (Human)).